The sequence spans 155 residues: Endoribonuclease YbeY (155 aa).

Zn(2+) contacts are provided by His-116, His-120, and His-126.

It belongs to the endoribonuclease YbeY family. Zn(2+) is required as a cofactor.

Its subcellular location is the cytoplasm. Single strand-specific metallo-endoribonuclease involved in late-stage 70S ribosome quality control and in maturation of the 3' terminus of the 16S rRNA. The polypeptide is Endoribonuclease YbeY (Thermobifida fusca (strain YX)).